The sequence spans 149 residues: Large ribosomal subunit protein bL9 (149 aa).

The protein belongs to the bacterial ribosomal protein bL9 family.

Binds to the 23S rRNA. In Mycoplasma pneumoniae (strain ATCC 29342 / M129 / Subtype 1) (Mycoplasmoides pneumoniae), this protein is Large ribosomal subunit protein bL9.